The primary structure comprises 150 residues: Cytochrome c oxidase subunit 5A, mitochondrial (150 aa).

The N-terminal 41 residues, 1 to 41 (MLGAALRRCAVAATTWAGPRGLLHSARTPGPAAAIQSVRCY), are a transit peptide targeting the mitochondrion. The short motif at 2-17 (LGAALRRCAVAATTWA) is the SIFI-degron element. An N6-acetyllysine mark is found at Lys87 and Lys113. Thr141 is subject to Phosphothreonine.

This sequence belongs to the cytochrome c oxidase subunit 5A family. As to quaternary structure, component of the cytochrome c oxidase (complex IV, CIV), a multisubunit enzyme composed of 14 subunits. The complex is composed of a catalytic core of 3 subunits MT-CO1, MT-CO2 and MT-CO3, encoded in the mitochondrial DNA, and 11 supernumerary subunits COX4I, COX5A, COX5B, COX6A, COX6B, COX6C, COX7A, COX7B, COX7C, COX8 and NDUFA4, which are encoded in the nuclear genome. The complex exists as a monomer or a dimer and forms supercomplexes (SCs) in the inner mitochondrial membrane with NADH-ubiquinone oxidoreductase (complex I, CI) and ubiquinol-cytochrome c oxidoreductase (cytochrome b-c1 complex, complex III, CIII), resulting in different assemblies (supercomplex SCI(1)III(2)IV(1) and megacomplex MCI(2)III(2)IV(2)). Interacts with AFG1L. Interacts with RAB5IF. Post-translationally, in response to mitochondrial stress, the precursor protein is ubiquitinated by the SIFI complex in the cytoplasm before mitochondrial import, leading to its degradation. Within the SIFI complex, UBR4 initiates ubiquitin chain that are further elongated or branched by KCMF1.

The protein resides in the mitochondrion inner membrane. The protein operates within energy metabolism; oxidative phosphorylation. Its function is as follows. Component of the cytochrome c oxidase, the last enzyme in the mitochondrial electron transport chain which drives oxidative phosphorylation. The respiratory chain contains 3 multisubunit complexes succinate dehydrogenase (complex II, CII), ubiquinol-cytochrome c oxidoreductase (cytochrome b-c1 complex, complex III, CIII) and cytochrome c oxidase (complex IV, CIV), that cooperate to transfer electrons derived from NADH and succinate to molecular oxygen, creating an electrochemical gradient over the inner membrane that drives transmembrane transport and the ATP synthase. Cytochrome c oxidase is the component of the respiratory chain that catalyzes the reduction of oxygen to water. Electrons originating from reduced cytochrome c in the intermembrane space (IMS) are transferred via the dinuclear copper A center (CU(A)) of subunit 2 and heme A of subunit 1 to the active site in subunit 1, a binuclear center (BNC) formed by heme A3 and copper B (CU(B)). The BNC reduces molecular oxygen to 2 water molecules using 4 electrons from cytochrome c in the IMS and 4 protons from the mitochondrial matrix. This is Cytochrome c oxidase subunit 5A, mitochondrial (COX5A) from Papio anubis (Olive baboon).